Reading from the N-terminus, the 274-residue chain is MAIKKFKPTSPGRRFVTVSDFEEITRTEPEKSLVEPLKKSGGRNAQGRITVRHRGGGHKRLYRIIDFKRDKDGIPAKVASIEYDPNRSARIALLHYADGEKRYIIAPAGLEVGQTVVSGPDADIKAGNCLPLKNIPVGTMIHNIELYPNGGGKLVRSAGASAQLMAKEGKYANIRMPSGEMRLLLQECRATIGQVGNVEHENITIGKAGRKRWLGIRPTVRGVVMNPVDHPHGGGEGRSPIGRNPVTPWGKPALGARTRKKKPGDRLIVKRRAR.

Residues 224-274 (VMNPVDHPHGGGEGRSPIGRNPVTPWGKPALGARTRKKKPGDRLIVKRRAR) form a disordered region. Basic residues predominate over residues 257 to 274 (RTRKKKPGDRLIVKRRAR).

The protein belongs to the universal ribosomal protein uL2 family. Part of the 50S ribosomal subunit. Forms a bridge to the 30S subunit in the 70S ribosome.

Functionally, one of the primary rRNA binding proteins. Required for association of the 30S and 50S subunits to form the 70S ribosome, for tRNA binding and peptide bond formation. It has been suggested to have peptidyltransferase activity; this is somewhat controversial. Makes several contacts with the 16S rRNA in the 70S ribosome. The polypeptide is Large ribosomal subunit protein uL2 (Pelotomaculum thermopropionicum (strain DSM 13744 / JCM 10971 / SI)).